The sequence spans 327 residues: GMP reductase (327 aa).

C176 functions as the Thioimidate intermediate in the catalytic mechanism. NADP(+) is bound at residue 205 to 228 (IIADGGIRTHGDIAKSIRFGATMV).

It belongs to the IMPDH/GMPR family. GuaC type 2 subfamily.

It catalyses the reaction IMP + NH4(+) + NADP(+) = GMP + NADPH + 2 H(+). Catalyzes the irreversible NADPH-dependent deamination of GMP to IMP. It functions in the conversion of nucleobase, nucleoside and nucleotide derivatives of G to A nucleotides, and in maintaining the intracellular balance of A and G nucleotides. The protein is GMP reductase of Streptococcus equi subsp. zooepidemicus (strain H70).